Here is a 268-residue protein sequence, read N- to C-terminus: NADH-quinone oxidoreductase subunit B 2 (268 aa).

Cysteine 42, cysteine 43, cysteine 108, and cysteine 138 together coordinate [4Fe-4S] cluster. The disordered stretch occupies residues 237–268 (SPNKAKGVAPEIRHNDLKRPAVEVDHARDEQR). Residues 247 to 268 (EIRHNDLKRPAVEVDHARDEQR) are compositionally biased toward basic and acidic residues.

Belongs to the complex I 20 kDa subunit family. In terms of assembly, NDH-1 is composed of 14 different subunits. Subunits NuoB, C, D, E, F, and G constitute the peripheral sector of the complex. [4Fe-4S] cluster is required as a cofactor.

The protein localises to the cell membrane. The catalysed reaction is a quinone + NADH + 5 H(+)(in) = a quinol + NAD(+) + 4 H(+)(out). NDH-1 shuttles electrons from NADH, via FMN and iron-sulfur (Fe-S) centers, to quinones in the respiratory chain. The immediate electron acceptor for the enzyme in this species is believed to be ubiquinone. Couples the redox reaction to proton translocation (for every two electrons transferred, four hydrogen ions are translocated across the cytoplasmic membrane), and thus conserves the redox energy in a proton gradient. This chain is NADH-quinone oxidoreductase subunit B 2, found in Roseiflexus castenholzii (strain DSM 13941 / HLO8).